Consider the following 130-residue polypeptide: Large ribosomal subunit protein bL12 (130 aa).

A disordered region spans residues 94–114; that stretch reads MTEGLPKTVKEKTSKSDAEDT.

It belongs to the bacterial ribosomal protein bL12 family. In terms of assembly, homodimer. Part of the ribosomal stalk of the 50S ribosomal subunit. Forms a multimeric L10(L12)X complex, where L10 forms an elongated spine to which 2 to 4 L12 dimers bind in a sequential fashion. Binds GTP-bound translation factors.

Functionally, forms part of the ribosomal stalk which helps the ribosome interact with GTP-bound translation factors. Is thus essential for accurate translation. This Chlamydia caviae (strain ATCC VR-813 / DSM 19441 / 03DC25 / GPIC) (Chlamydophila caviae) protein is Large ribosomal subunit protein bL12.